The chain runs to 789 residues: Endonuclease MutS2 (789 aa).

334–341 (GPNTGGKT) is an ATP binding site. Positions 690 to 714 (PEKDIQQSGTGKIMKSKTGDTKSEV) are disordered. One can recognise a Smr domain in the interval 714-789 (VDVRGKNLEE…GMGVTIVELK (76 aa)).

The protein belongs to the DNA mismatch repair MutS family. MutS2 subfamily. As to quaternary structure, homodimer. Binds to stalled ribosomes, contacting rRNA.

Its function is as follows. Endonuclease that is involved in the suppression of homologous recombination and thus may have a key role in the control of bacterial genetic diversity. In terms of biological role, acts as a ribosome collision sensor, splitting the ribosome into its 2 subunits. Detects stalled/collided 70S ribosomes which it binds and splits by an ATP-hydrolysis driven conformational change. Acts upstream of the ribosome quality control system (RQC), a ribosome-associated complex that mediates the extraction of incompletely synthesized nascent chains from stalled ribosomes and their subsequent degradation. Probably generates substrates for RQC. The sequence is that of Endonuclease MutS2 from Alkaliphilus metalliredigens (strain QYMF).